A 516-amino-acid polypeptide reads, in one-letter code: Beta-glucosidase 1 (516 aa).

The signal sequence occupies residues 1–21; it reads MGHRLVVVLLLALLVAGAARA. Gln68 is an a beta-D-glucoside binding site. An N-linked (GlcNAc...) asparagine glycan is attached at Asn96. A beta-D-glucoside-binding positions include His169 and 214-215; that span reads NE. The active-site Proton donor is Glu215. Cys234 and Cys237 are oxidised to a cystine. An N-linked (GlcNAc...) asparagine glycan is attached at Asn290. Residue Tyr353 participates in a beta-D-glucoside binding. N-linked (GlcNAc...) asparagine glycosylation occurs at Asn364. Glu424 is a binding site for a beta-D-glucoside. Glu424 (nucleophile) is an active-site residue. Asn432 carries N-linked (GlcNAc...) asparagine glycosylation. Residues Trp471, 478-479, and Phe487 contribute to the a beta-D-glucoside site; that span reads EW.

Belongs to the glycosyl hydrolase 1 family.

The catalysed reaction is Hydrolysis of terminal, non-reducing beta-D-glucosyl residues with release of beta-D-glucose.. This chain is Beta-glucosidase 1 (BGLU1), found in Oryza sativa subsp. japonica (Rice).